Here is a 126-residue protein sequence, read N- to C-terminus: Fluoride-specific ion channel FluC 1 (126 aa).

Helical transmembrane passes span 37–57, 67–87, and 98–118; these read HWGTLLVNVISSFALGLVLAL, IALLMGVGFFGTLSTFSTFVV, and LLAAAALAVISIVAGLIAAAA. Na(+) contacts are provided by Gly77 and Ser80.

Belongs to the fluoride channel Fluc/FEX (TC 1.A.43) family.

The protein localises to the cell inner membrane. It catalyses the reaction fluoride(in) = fluoride(out). Na(+) is not transported, but it plays an essential structural role and its presence is essential for fluoride channel function. Its function is as follows. Fluoride-specific ion channel. Important for reducing fluoride concentration in the cell, thus reducing its toxicity. This chain is Fluoride-specific ion channel FluC 1, found in Parasynechococcus marenigrum (strain WH8102).